The chain runs to 178 residues: Ribosome maturation factor RimM (178 aa).

The PRC barrel domain occupies 94–174; that stretch reads KNEFFWFDLI…RIDVINSFDI (81 aa).

The protein belongs to the RimM family. Binds ribosomal protein uS19.

Its subcellular location is the cytoplasm. Its function is as follows. An accessory protein needed during the final step in the assembly of 30S ribosomal subunit, possibly for assembly of the head region. Essential for efficient processing of 16S rRNA. May be needed both before and after RbfA during the maturation of 16S rRNA. It has affinity for free ribosomal 30S subunits but not for 70S ribosomes. This is Ribosome maturation factor RimM from Aliarcobacter butzleri (strain RM4018) (Arcobacter butzleri).